The chain runs to 247 residues: 5-oxoprolinase subunit A (247 aa).

This sequence belongs to the LamB/PxpA family. Forms a complex composed of PxpA, PxpB and PxpC.

The catalysed reaction is 5-oxo-L-proline + ATP + 2 H2O = L-glutamate + ADP + phosphate + H(+). Its function is as follows. Catalyzes the cleavage of 5-oxoproline to form L-glutamate coupled to the hydrolysis of ATP to ADP and inorganic phosphate. The sequence is that of 5-oxoprolinase subunit A from Klebsiella pneumoniae subsp. pneumoniae (strain ATCC 700721 / MGH 78578).